Reading from the N-terminus, the 162-residue chain is Large ribosomal subunit protein uL15 (162 aa).

Basic and acidic residues predominate over residues 1–13 (MKLNEIRDNEGAT). Residues 1–37 (MKLNEIRDNEGATKNRMRVGRGIGSGKGKTAGRGVKG) are disordered. A compositionally biased stretch (gly residues) spans 21 to 35 (RGIGSGKGKTAGRGV).

Belongs to the universal ribosomal protein uL15 family. In terms of assembly, part of the 50S ribosomal subunit.

Binds to the 23S rRNA. In Methylobacterium nodulans (strain LMG 21967 / CNCM I-2342 / ORS 2060), this protein is Large ribosomal subunit protein uL15.